We begin with the raw amino-acid sequence, 207 residues long: Small ribosomal subunit protein uS4 (207 aa).

An S4 RNA-binding domain is found at 97–165 (SRLDNLVFRM…VKLALESKAV (69 aa)).

The protein belongs to the universal ribosomal protein uS4 family. In terms of assembly, part of the 30S ribosomal subunit. Contacts protein S5. The interaction surface between S4 and S5 is involved in control of translational fidelity.

Its function is as follows. One of the primary rRNA binding proteins, it binds directly to 16S rRNA where it nucleates assembly of the body of the 30S subunit. With S5 and S12 plays an important role in translational accuracy. This is Small ribosomal subunit protein uS4 from Mycoplasmoides gallisepticum (strain R(low / passage 15 / clone 2)) (Mycoplasma gallisepticum).